The primary structure comprises 163 residues: SsrA-binding protein (163 aa).

The protein belongs to the SmpB family.

The protein localises to the cytoplasm. Its function is as follows. Required for rescue of stalled ribosomes mediated by trans-translation. Binds to transfer-messenger RNA (tmRNA), required for stable association of tmRNA with ribosomes. tmRNA and SmpB together mimic tRNA shape, replacing the anticodon stem-loop with SmpB. tmRNA is encoded by the ssrA gene; the 2 termini fold to resemble tRNA(Ala) and it encodes a 'tag peptide', a short internal open reading frame. During trans-translation Ala-aminoacylated tmRNA acts like a tRNA, entering the A-site of stalled ribosomes, displacing the stalled mRNA. The ribosome then switches to translate the ORF on the tmRNA; the nascent peptide is terminated with the 'tag peptide' encoded by the tmRNA and targeted for degradation. The ribosome is freed to recommence translation, which seems to be the essential function of trans-translation. The chain is SsrA-binding protein from Shewanella putrefaciens (strain CN-32 / ATCC BAA-453).